A 745-amino-acid chain; its full sequence is MEKDVVSLEDALEHGLTKEEFQKIQEILGRIPNSTELGIFSAMWSEHCSYKNSILKLKTLPTTSDKLLAKAGEENAGAMDIGDGLAVVFKIESHNHPTAVEPYQGAATGVGGIMRDIFTMGARPIVSLNSLRFGNPDEPKNKYLLSRAVKGIGDYGNSLGIAVSGGELFIDECFSKNPLVNAMTVGIVRHDQMASATTGGQIGNSVYIVGATTGRDGIHGASFASKDLSKESESKRSAVQVGDPFMEKLLMEASLEAIQKGLLVGIQDMGAAGISCATSEMSAKGKTGMKIDLDLVPFRETGMNAYEAMLSESQERMLVVPKKGKESELVSIFEKWNLNAVKIGEVTADGMIEIYMGGKLKAKIPAESLVLGGGAPRYERETKRPSYLDAVKTWKPDEIPDVTKGANSKEILLKILSSWNVCSRKPITEQYDSEVGLVKLIGPGLDGGLSAIPGTNKALATATDCNSRYTYLDPYKGAEFAVCEAARNVYVTGATPYGVTNNLNFANPYIPENYYIFSECIRGMGDACRFLGLPVTGGNVSFYNESPEGPIFPTPTIGMVGILENKEKLIFNFPKEIGVELAVLGNFRPSLGGSEYLKKIHGQINGSIPELDIKEELELCKLILSLNESRILKSAKDLSLGGIAVALSKTVLFSGLGIESDLTSLRRNRLDLTLFGESSTAVLVGFDSLSKEDIRKQTEAYGLKFYPIGKTNSSGILEIKDAEIKISFQELSGPYEKGLEAVFAL.

H47 is a catalytic residue. ATP contacts are provided by Y50 and K90. Residue E92 participates in Mg(2+) binding. Substrate contacts are provided by residues 93-96 (SHNH) and R115. H94 acts as the Proton acceptor in catalysis. Residue D116 coordinates Mg(2+). Residue Q240 coordinates substrate. D268 is a Mg(2+) binding site. Residue 312–314 (ESQ) participates in substrate binding. 2 residues coordinate ATP: N501 and G538. N539 contributes to the Mg(2+) binding site. Substrate is bound at residue S541.

Belongs to the FGAMS family. In terms of assembly, monomer. Part of the FGAM synthase complex composed of 1 PurL, 1 PurQ and 2 PurS subunits.

It localises to the cytoplasm. It carries out the reaction N(2)-formyl-N(1)-(5-phospho-beta-D-ribosyl)glycinamide + L-glutamine + ATP + H2O = 2-formamido-N(1)-(5-O-phospho-beta-D-ribosyl)acetamidine + L-glutamate + ADP + phosphate + H(+). The protein operates within purine metabolism; IMP biosynthesis via de novo pathway; 5-amino-1-(5-phospho-D-ribosyl)imidazole from N(2)-formyl-N(1)-(5-phospho-D-ribosyl)glycinamide: step 1/2. Its function is as follows. Part of the phosphoribosylformylglycinamidine synthase complex involved in the purines biosynthetic pathway. Catalyzes the ATP-dependent conversion of formylglycinamide ribonucleotide (FGAR) and glutamine to yield formylglycinamidine ribonucleotide (FGAM) and glutamate. The FGAM synthase complex is composed of three subunits. PurQ produces an ammonia molecule by converting glutamine to glutamate. PurL transfers the ammonia molecule to FGAR to form FGAM in an ATP-dependent manner. PurS interacts with PurQ and PurL and is thought to assist in the transfer of the ammonia molecule from PurQ to PurL. The sequence is that of Phosphoribosylformylglycinamidine synthase subunit PurL from Leptospira interrogans serogroup Icterohaemorrhagiae serovar Lai (strain 56601).